Reading from the N-terminus, the 208-residue chain is MNKINNNNNNIHKLIKSLKIGNNDRINNNNNIINNNNIINNNNNDLLIEDDYFNGLLSTSPLPSQFNQLSSSPPSINSSLESIPMSPIRIQSNNVCPGAPIKPKKYLLPKSNYNLPRQRLVFTECVGSGSGSDSSSGSTSSPNTVNNYNSDDESNAAVVSFSPKVSKKLSQSSVQFIPSSSFRQMDSPSGNQNVPVFNSPKARKRLVF.

A disordered region spans residues 126–151; that stretch reads VGSGSGSDSSSGSTSSPNTVNNYNSD. Positions 131–141 are enriched in low complexity; sequence GSDSSSGSTSS.

This is an uncharacterized protein from Dictyostelium discoideum (Social amoeba).